Here is a 1495-residue protein sequence, read N- to C-terminus: Terminal uridylyltransferase 7 (1495 aa).

Disordered stretches follow at residues 1–30 (MGDT…GHPQ), 43–69 (HGSK…RKGP), 89–140 (WMND…EDGY), and 162–205 (LETT…PVID). Residues 15–26 (DRGTMDDDDFRR) are compositionally biased toward basic and acidic residues. Phosphothreonine is present on residues Thr-57 and Thr-64. Basic and acidic residues-rich tracts occupy residues 92–118 (DSHK…EFKP) and 128–140 (QRKD…EDGY). Residues Ser-132 and Ser-172 each carry the phosphoserine modification. Positions 178–187 (QRSRPRKPRK) are enriched in basic residues. The segment at 244 to 274 (YTCRLCDVLIESIAFAHKHIKEKRHKKNIKE) adopts a Matrin-type zinc-finger fold. Residues 551–600 (VGQLWVELLRFYALEFNLADLVISIRVKELVSRELKDWPKKRIAIEDPYS) form the PAP-associated 1 domain. Ser-600 carries the post-translational modification Phosphoserine. The span at 734–756 (DDYKGDKVYHPETGRKNEKEKVG) shows a compositional bias: basic and acidic residues. 2 disordered regions span residues 734–757 (DDYK…KVGR) and 831–898 (THSV…EDDE). Residues 831 to 841 (THSVQGQTSEM) are compositionally biased toward polar residues. Acidic residues-rich tracts occupy residues 843-859 (PSDE…EEEE), 868-880 (EDED…DELD), and 887-898 (GDEDALSEEDDE). Ser-844 carries the post-translational modification Phosphoserine. Ser-893 and Ser-939 each carry phosphoserine. Positions 951 to 1495 (SKLIFTKGKS…ASAKRTQQES (545 aa)) are sufficient for monouridylation activity. The CCHC-type 1 zinc finger occupies 963-980 (VVCSLCKREGHLKKDCPE). UTP-binding positions include 1047-1050 (SSKN), 1057-1060 (SDLD), Asn-1130, Lys-1152, 1170-1174 (SYAYT), and His-1286. 2 residues coordinate Mg(2+): Asp-1058 and Asp-1060. One can recognise a PAP-associated 2 domain in the interval 1233–1286 (SVGQLWLGLLRFYTEEFDFKEHVISIRRKSLLTTFKKQWTSKYIVIEDPFDLNH). Residues 1345–1362 (RCCRICGKIGHFMKDCPM) form a CCHC-type 2 zinc finger. Disordered regions lie at residues 1367–1424 (RRRR…MRAA) and 1466–1495 (CPQF…QQES). Over residues 1381–1410 (PENKEKRSKEDKEIHNKYTEREVSTKEDKP) the composition is skewed to basic and acidic residues. Residues 1451-1468 (KRCFICGREGHIKKECPQ) form a CCHC-type 3 zinc finger. Polar residues predominate over residues 1470 to 1485 (KGSSGSLSSKYMTQGK).

Belongs to the DNA polymerase type-B-like family. In terms of assembly, interacts with MOV10; the interaction is RNA-dependent. It depends on Mg(2+) as a cofactor. Mn(2+) serves as cofactor.

It is found in the cytoplasm. The enzyme catalyses RNA(n) + UTP = RNA(n)-3'-uridine ribonucleotide + diphosphate. Its function is as follows. Uridylyltransferase that mediates the terminal uridylation of mRNAs with short (less than 25 nucleotides) poly(A) tails, hence facilitating global mRNA decay. Essential for both oocyte maturation and fertility. Through 3' terminal uridylation of mRNA, sculpts, with TUT7, the maternal transcriptome by eliminating transcripts during oocyte growth. Involved in microRNA (miRNA)-induced gene silencing through uridylation of deadenylated miRNA targets. Also functions as an integral regulator of microRNA biogenesiS using 3 different uridylation mechanisms. Acts as a suppressor of miRNA biogenesis by mediating the terminal uridylation of some miRNA precursors, including that of let-7 (pre-let-7). Uridylated pre-let-7 RNA is not processed by Dicer and undergo degradation. Pre-let-7 uridylation is strongly enhanced in the presence of LIN28A. In the absence of LIN28A, TUT7 and TUT4 monouridylate group II pre-miRNAs, which includes most of pre-let7 members, that shapes an optimal 3' end overhang for efficient processing. Add oligo-U tails to truncated pre-miRNAS with a 5' overhang which may promote rapid degradation of non-functional pre-miRNA species. Does not play a role in replication-dependent histone mRNA degradation. Due to functional redundancy between TUT4 and TUT7, the identification of the specific role of each of these proteins is difficult. TUT4 and TUT7 restrict retrotransposition of long interspersed element-1 (LINE-1) in cooperation with MOV10 counteracting the RNA chaperonne activity of L1RE1. TUT7 uridylates LINE-1 mRNAs in the cytoplasm which inhibits initiation of reverse transcription once in the nucleus, whereas uridylation by TUT4 destabilizes mRNAs in cytoplasmic ribonucleoprotein granules. The sequence is that of Terminal uridylyltransferase 7 from Homo sapiens (Human).